Consider the following 61-residue polypeptide: Metallothionein-1D (61 aa).

The tract at residues 1–29 is beta; sequence MDPNCSCSTGGSCSCATSCTCKACRCTSC. The a divalent metal cation site is built by Cys5, Cys7, Cys13, Cys15, Cys19, Cys21, Cys24, Cys26, Cys29, Cys33, Cys34, Cys36, Cys37, Cys41, Cys44, Cys48, Cys50, Cys57, Cys59, and Cys60. The segment at 30 to 61 is alpha; sequence KKSCCSCCPAGCAKCAQGCICKGASDKCSCCA.

This sequence belongs to the metallothionein superfamily. Type 1 family. Monomer.

In terms of biological role, metallothioneins have a high content of cysteine residues that bind various heavy metals; these proteins are transcriptionally regulated by both heavy metals and glucocorticoids. This chain is Metallothionein-1D (MT1D), found in Sus scrofa (Pig).